The following is a 221-amino-acid chain: Type II secretion system protein J (221 aa).

A propeptide spans 1 to 15 (MWRTNQVSSRQNMAG) (leader sequence). F16 bears the N-methylphenylalanine mark. The chain crosses the membrane as a helical span at residues 16–36 (FTLIEVLVAIAIFASLSVGAY).

Belongs to the GSP J family. In terms of assembly, type II secretion is composed of four main components: the outer membrane complex, the inner membrane complex, the cytoplasmic secretion ATPase and the periplasm-spanning pseudopilus. Interacts with core component epsG. Cleaved by prepilin peptidase. In terms of processing, methylated by prepilin peptidase at the amino group of the N-terminal phenylalanine once the leader sequence is cleaved by prepilin peptidase.

Its subcellular location is the cell inner membrane. Its function is as follows. Component of the type II secretion system required for the energy-dependent secretion of extracellular factors such as proteases and toxins from the periplasm. Part of the pseudopilus tip complex that is critical for the recognition and binding of secretion substrates. The chain is Type II secretion system protein J (epsJ) from Vibrio cholerae serotype O1 (strain ATCC 39315 / El Tor Inaba N16961).